We begin with the raw amino-acid sequence, 383 residues long: Mannan endo-1,4-beta-mannosidase A (383 aa).

An N-terminal signal peptide occupies residues 1–18 (MKFSQALLSLASLALAAA). N-linked (GlcNAc...) asparagine glycosylation is present at N75. A substrate-binding site is contributed by W97. An N-linked (GlcNAc...) asparagine glycan is attached at N199. Substrate-binding positions include N210 and 211–213 (EPR). Catalysis depends on E211, which acts as the Proton donor/acceptor. A disulfide bridge connects residues C214 and C217. 2 residues coordinate substrate: Y279 and W283. Residues C301 and C308 are joined by a disulfide bond. The active-site Nucleophile is E312. The cysteines at positions 320 and 369 are disulfide-linked. N332 carries N-linked (GlcNAc...) asparagine glycosylation. Substrate is bound at residue W342.

The protein belongs to the glycosyl hydrolase 5 (cellulase A) family. As to quaternary structure, monomer.

The protein resides in the secreted. The enzyme catalyses Random hydrolysis of (1-&gt;4)-beta-D-mannosidic linkages in mannans, galactomannans and glucomannans.. Its function is as follows. Endo-1,4-mannanase that catalyzes the random hydrolysis of (1-&gt;4)-beta-D-mannosidic linkages in mannans and heteromannans. It is a crucial enzyme for depolymerization of seed galactomannans and wood galactoglucomannans. Active against locust bean gum and gum guar. Also has transglycosylation activity. The protein is Mannan endo-1,4-beta-mannosidase A (manA) of Emericella nidulans (strain FGSC A4 / ATCC 38163 / CBS 112.46 / NRRL 194 / M139) (Aspergillus nidulans).